The sequence spans 88 residues: Beta-insect excitatory toxin 2 (88 aa).

The first 18 residues, 1 to 18 (MKFLLLFLVVLPIMGVLG), serve as a signal peptide directing secretion. One can recognise an LCN-type CS-alpha/beta domain in the interval 20-83 (KNGYAVDSSG…ISDTRKSYCD (64 aa)). 4 cysteine pairs are disulfide-bonded: Cys-34-Cys-55, Cys-40-Cys-60, Cys-44-Cys-62, and Cys-56-Cys-82.

It belongs to the long (4 C-C) scorpion toxin superfamily. Sodium channel inhibitor family. Beta subfamily. In terms of tissue distribution, expressed by the venom gland.

The protein localises to the secreted. Functionally, excitatory insect beta-toxins induce a spastic paralysis. They bind voltage-independently at site-4 of sodium channels (Nav) and shift the voltage of activation toward more negative potentials thereby affecting sodium channel activation and promoting spontaneous and repetitive firing. This toxin is active only on insects. The chain is Beta-insect excitatory toxin 2 from Androctonus australis (Sahara scorpion).